The sequence spans 233 residues: Fibroblast growth factor 8 (233 aa).

An N-terminal signal peptide occupies residues methionine 1–alanine 22. The N-linked (GlcNAc...) asparagine glycan is linked to asparagine 155.

It belongs to the heparin-binding growth factors family. Monomer. Homodimer. Interacts with FGFR1, FGFR2, FGFR3 and FGFR4. Affinity between fibroblast growth factors (FGFs) and their receptors is increased by heparan sulfate glycosaminoglycans that function as coreceptors.

The protein localises to the secreted. Its function is as follows. Plays an important role in the regulation of embryonic development, cell proliferation, cell differentiation and cell migration. Required for normal brain, eye, ear and limb development during embryogenesis. Required for normal development of the gonadotropin-releasing hormone (GnRH) neuronal system. Plays a role in neurite outgrowth in hippocampal cells. This Homo sapiens (Human) protein is Fibroblast growth factor 8 (FGF8).